We begin with the raw amino-acid sequence, 483 residues long: Glutamyl-tRNA(Gln) amidotransferase subunit A (483 aa).

Residues Lys76 and Ser151 each act as charge relay system in the active site. Ser175 functions as the Acyl-ester intermediate in the catalytic mechanism.

The protein belongs to the amidase family. GatA subfamily. Heterotrimer of A, B and C subunits.

It carries out the reaction L-glutamyl-tRNA(Gln) + L-glutamine + ATP + H2O = L-glutaminyl-tRNA(Gln) + L-glutamate + ADP + phosphate + H(+). Allows the formation of correctly charged Gln-tRNA(Gln) through the transamidation of misacylated Glu-tRNA(Gln) in organisms which lack glutaminyl-tRNA synthetase. The reaction takes place in the presence of glutamine and ATP through an activated gamma-phospho-Glu-tRNA(Gln). This Pseudomonas entomophila (strain L48) protein is Glutamyl-tRNA(Gln) amidotransferase subunit A.